A 126-amino-acid polypeptide reads, in one-letter code: SPbeta prophage-derived uncharacterized protein YorC (126 aa).

This chain is SPbeta prophage-derived uncharacterized protein YorC (yorC), found in Bacillus subtilis (strain 168).